The chain runs to 192 residues: Transmembrane protein 276 (192 aa).

The signal sequence occupies residues 1-32; that stretch reads MVSKPRTEWSTVLSHLVLAGVSLHAAVSSVQS. The next 4 membrane-spanning stretches (helical) occupy residues 35 to 55, 63 to 83, 92 to 112, and 114 to 134; these read GAAAGFLLQTFAAIIMLAPGP, AGAWVATVIGLPLLAFDFHWV, LLLGGGMVLAVAGDHLGPEGC, and VAGQAVLLVVAVTILIVAVFT.

It localises to the membrane. The chain is Transmembrane protein 276 from Mus musculus (Mouse).